The chain runs to 681 residues: Phenylalanine--tRNA ligase beta subunit (681 aa).

The 76-residue stretch at 288-363 (PARETVLLRP…RIHGYDQIPE (76 aa)) folds into the B5 domain. Asp341, Asp347, Glu350, and Glu351 together coordinate Mg(2+). An FDX-ACB domain is found at 586–681 (SSFPSIQRDL…EKQLEAVLLR (96 aa)).

The protein belongs to the phenylalanyl-tRNA synthetase beta subunit family. Type 1 subfamily. In terms of assembly, tetramer of two alpha and two beta subunits. It depends on Mg(2+) as a cofactor.

It localises to the cytoplasm. It carries out the reaction tRNA(Phe) + L-phenylalanine + ATP = L-phenylalanyl-tRNA(Phe) + AMP + diphosphate + H(+). This chain is Phenylalanine--tRNA ligase beta subunit, found in Rhodopirellula baltica (strain DSM 10527 / NCIMB 13988 / SH1).